The sequence spans 248 residues: tRNA (guanine-N(1)-)-methyltransferase (248 aa).

Residues Gly-113 and 133–138 each bind S-adenosyl-L-methionine; that span reads IGDFVL.

The protein belongs to the RNA methyltransferase TrmD family. As to quaternary structure, homodimer.

The protein localises to the cytoplasm. It catalyses the reaction guanosine(37) in tRNA + S-adenosyl-L-methionine = N(1)-methylguanosine(37) in tRNA + S-adenosyl-L-homocysteine + H(+). In terms of biological role, specifically methylates guanosine-37 in various tRNAs. In Dehalococcoides mccartyi (strain CBDB1), this protein is tRNA (guanine-N(1)-)-methyltransferase.